The following is a 183-amino-acid chain: Holliday junction branch migration complex subunit RuvA (183 aa).

The domain I stretch occupies residues 1 to 64; the sequence is MVVGIEGIIT…EDSNKFYGFL (64 aa). The domain II stretch occupies residues 65–139; it reads DKDEQKMFEM…DTRTKLENVS (75 aa). Position 139 (serine 139) is a region of interest, flexible linker. The segment at 139–183 is domain III; the sequence is SDDKSEALAALLTLGFKQEKIISVLASAQATGTSELIKEALKKLR.

The protein belongs to the RuvA family. As to quaternary structure, homotetramer. Forms an RuvA(8)-RuvB(12)-Holliday junction (HJ) complex. HJ DNA is sandwiched between 2 RuvA tetramers; dsDNA enters through RuvA and exits via RuvB. An RuvB hexamer assembles on each DNA strand where it exits the tetramer. Each RuvB hexamer is contacted by two RuvA subunits (via domain III) on 2 adjacent RuvB subunits; this complex drives branch migration. In the full resolvosome a probable DNA-RuvA(4)-RuvB(12)-RuvC(2) complex forms which resolves the HJ.

It localises to the cytoplasm. In terms of biological role, the RuvA-RuvB-RuvC complex processes Holliday junction (HJ) DNA during genetic recombination and DNA repair, while the RuvA-RuvB complex plays an important role in the rescue of blocked DNA replication forks via replication fork reversal (RFR). RuvA specifically binds to HJ cruciform DNA, conferring on it an open structure. The RuvB hexamer acts as an ATP-dependent pump, pulling dsDNA into and through the RuvAB complex. HJ branch migration allows RuvC to scan DNA until it finds its consensus sequence, where it cleaves and resolves the cruciform DNA. This chain is Holliday junction branch migration complex subunit RuvA, found in Campylobacter jejuni subsp. doylei (strain ATCC BAA-1458 / RM4099 / 269.97).